The chain runs to 111 residues: Large ribosomal subunit protein uL22 (111 aa).

This sequence belongs to the universal ribosomal protein uL22 family. In terms of assembly, part of the 50S ribosomal subunit.

In terms of biological role, this protein binds specifically to 23S rRNA; its binding is stimulated by other ribosomal proteins, e.g. L4, L17, and L20. It is important during the early stages of 50S assembly. It makes multiple contacts with different domains of the 23S rRNA in the assembled 50S subunit and ribosome. Functionally, the globular domain of the protein is located near the polypeptide exit tunnel on the outside of the subunit, while an extended beta-hairpin is found that lines the wall of the exit tunnel in the center of the 70S ribosome. The polypeptide is Large ribosomal subunit protein uL22 (Clostridium acetobutylicum (strain ATCC 824 / DSM 792 / JCM 1419 / IAM 19013 / LMG 5710 / NBRC 13948 / NRRL B-527 / VKM B-1787 / 2291 / W)).